The chain runs to 304 residues: tRNA dimethylallyltransferase (304 aa).

Residue 13-20 (GPTAAGKT) participates in ATP binding. 15-20 (TAAGKT) is a binding site for substrate. The interval 38 to 41 (DSRQ) is interaction with substrate tRNA.

Belongs to the IPP transferase family. As to quaternary structure, monomer. The cofactor is Mg(2+).

It catalyses the reaction adenosine(37) in tRNA + dimethylallyl diphosphate = N(6)-dimethylallyladenosine(37) in tRNA + diphosphate. Functionally, catalyzes the transfer of a dimethylallyl group onto the adenine at position 37 in tRNAs that read codons beginning with uridine, leading to the formation of N6-(dimethylallyl)adenosine (i(6)A). The chain is tRNA dimethylallyltransferase from Cytophaga hutchinsonii (strain ATCC 33406 / DSM 1761 / CIP 103989 / NBRC 15051 / NCIMB 9469 / D465).